Reading from the N-terminus, the 20-residue chain is Ribosome-inactivating protein (20 aa).

The interval 1–20 (NVRFDLSGATSSSYKTFIKN) is disordered. A compositionally biased stretch (polar residues) spans 8-20 (GATSSSYKTFIKN).

Belongs to the ribosome-inactivating protein family. Type 1 RIP subfamily.

It carries out the reaction Endohydrolysis of the N-glycosidic bond at one specific adenosine on the 28S rRNA.. The protein is Ribosome-inactivating protein of Cucurbita pepo (Vegetable marrow).